Reading from the N-terminus, the 550-residue chain is Chaperonin GroEL (550 aa).

Residues Thr30–Pro33, Lys51, Asp87–Thr91, Gly415, Asn479–Ala481, and Asp495 each bind ATP.

The protein belongs to the chaperonin (HSP60) family. Forms a cylinder of 14 subunits composed of two heptameric rings stacked back-to-back. Interacts with the co-chaperonin GroES.

It localises to the cytoplasm. It catalyses the reaction ATP + H2O + a folded polypeptide = ADP + phosphate + an unfolded polypeptide.. Together with its co-chaperonin GroES, plays an essential role in assisting protein folding. The GroEL-GroES system forms a nano-cage that allows encapsulation of the non-native substrate proteins and provides a physical environment optimized to promote and accelerate protein folding. This Aromatoleum aromaticum (strain DSM 19018 / LMG 30748 / EbN1) (Azoarcus sp. (strain EbN1)) protein is Chaperonin GroEL.